The sequence spans 203 residues: Proline-rich protein 1 (203 aa).

The N-terminal stretch at 1 to 20 (MMKLGLYLTLLFLSVWTVSG) is a signal peptide.

As to expression, component of the acid-insoluble and acid-soluble organic matrix of calcified layers of the shell (at protein level).

The protein localises to the secreted. This chain is Proline-rich protein 1, found in Lottia gigantea (Giant owl limpet).